Reading from the N-terminus, the 537-residue chain is Senescence-associated carboxylesterase 101 (537 aa).

The N-terminal stretch at 1–27 (MESSSSLKGSALGKLVVTSGLLHSSWS) is a signal peptide. A helical membrane pass occupies residues 140–160 (VIITGAALGGSVASLYTLWLL).

Part of a nuclear complex made of EDS1, PAD4 and SAG101, that can be redirected to the cytoplasm in the presence of an extranuclear form of EDS1. Interacts directly with EDS1. As to expression, expressed in senescing leaves.

It localises to the membrane. Its subcellular location is the nucleus. The protein localises to the cytoplasm. It catalyses the reaction a carboxylic ester + H2O = an alcohol + a carboxylate + H(+). Its function is as follows. Acyl hydrolase that triggers the leaf senescence onset. Can use triolein as substrate to produce oleic acids. Involved in the EDS1-dependent intrinsic and indispensable resistance signaling pathway; together with PAD4, required for programmed cell death triggered by RPS4 in response to avirulent pathogens (e.g. P.syringae pv. tomato strain DC3000 and H.parasitica isolates CALA2 and EMWA1) and in restricting the growth of virulent pathogens (e.g. H.parasitica isolates NOCO2 and P.syringae pv. tomato strain DC3000 avrRps4). Contributes in reinforcing the immune response around hypersensitive response foci. Regulates the nuclear localization of EDS1. Essential for the RPP8/HRT-mediated resistance to the turnip crinkle virus (TCV). Involved in the post-invasion resistance to P.pachyrhizi in the mesophyll. The sequence is that of Senescence-associated carboxylesterase 101 (SAG101) from Arabidopsis thaliana (Mouse-ear cress).